The following is a 233-amino-acid chain: MDVNEIRENAKKLMELMMLDKPFVAVKLAKSKEEIPEGYETLDEEKRHCEMIQMARLERKKLYATVDKHLCKGGAYAMGVFRNPPEPLATGKLYVKLGNFKDEEAAKKTVDAIPKVEEEIYATVYAPLDETDFIPDSIVFIGEPLYALRLVQAILYHKGGRFQADFSGIQSLCADAVAAVYTRKAPNMTLGCNGSRKYAGIKPEEVVVAFPPEKLKDIVEAIEHFRQVWTCGH.

This is an uncharacterized protein from Methanocaldococcus jannaschii (strain ATCC 43067 / DSM 2661 / JAL-1 / JCM 10045 / NBRC 100440) (Methanococcus jannaschii).